We begin with the raw amino-acid sequence, 248 residues long: Trypsin I-P1 (248 aa).

An N-terminal signal peptide occupies residues 1 to 15 (MKFLVLVAFVGVTVA). A propeptide spans 16–25 (FPISDEDDDK) (activation peptide). In terms of domain architecture, Peptidase S1 spans 26 to 246 (IVGGYSCARS…YVSWIKTTMS (221 aa)). Disulfide bonds link Cys32/Cys162, Cys50/Cys66, Cys134/Cys235, Cys141/Cys208, Cys173/Cys187, and Cys198/Cys222. His65 (charge relay system) is an active-site residue. Residues Glu77, Asn79, and Glu87 each coordinate Ca(2+). The Charge relay system role is filled by Asp109. Catalysis depends on Ser202, which acts as the Charge relay system.

The protein belongs to the peptidase S1 family. Ca(2+) is required as a cofactor. In terms of tissue distribution, high levels are seen in the pancreas while lower levels are found in the liver, spleen and thymus.

Its subcellular location is the secreted. The protein resides in the extracellular space. It catalyses the reaction Preferential cleavage: Arg-|-Xaa, Lys-|-Xaa.. This is Trypsin I-P1 from Gallus gallus (Chicken).